The primary structure comprises 418 residues: L-rhamnose isomerase (418 aa).

Positions 262, 294, and 296 each coordinate Mn(2+).

This sequence belongs to the rhamnose isomerase family. It depends on Mn(2+) as a cofactor.

It localises to the cytoplasm. It carries out the reaction L-rhamnopyranose = L-rhamnulose. The protein operates within carbohydrate degradation; L-rhamnose degradation; glycerone phosphate from L-rhamnose: step 1/3. In terms of biological role, catalyzes the interconversion of L-rhamnose and L-rhamnulose. This is L-rhamnose isomerase from Bacteroides thetaiotaomicron (strain ATCC 29148 / DSM 2079 / JCM 5827 / CCUG 10774 / NCTC 10582 / VPI-5482 / E50).